Reading from the N-terminus, the 95-residue chain is Cytochrome b-c1 complex subunit 8, mitochondrial (95 aa).

The chain crosses the membrane as a helical span at residues 57–74; sequence FLYVAIPFVVVWSIWTRA.

Belongs to the UQCRQ/QCR8 family. As to quaternary structure, component of the ubiquinol-cytochrome c oxidoreductase (cytochrome b-c1 complex, complex III, CIII), a multisubunit enzyme composed of 10 subunits. The complex is composed of 3 respiratory subunits cytochrome b (COB), cytochrome c1 (CYT1) and Rieske protein (RIP1), 2 core protein subunits COR1 and QCR2, and 5 low-molecular weight protein subunits QCR6, QCR7, QCR8, QCR9 and QCR10. The complex exists as an obligatory dimer and forms supercomplexes (SCs) in the inner mitochondrial membrane with a monomer or a dimer of cytochrome c oxidase (complex IV, CIV), resulting in 2 different assemblies (supercomplexes III(2)IV and III(2)IV(2)).

The protein resides in the membrane. It is found in the mitochondrion inner membrane. In terms of biological role, component of the ubiquinol-cytochrome c oxidoreductase, a multisubunit transmembrane complex that is part of the mitochondrial electron transport chain which drives oxidative phosphorylation. The complex plays an important role in the uptake of multiple carbon sources present in different host niches. This chain is Cytochrome b-c1 complex subunit 8, mitochondrial, found in Candida albicans (strain SC5314 / ATCC MYA-2876) (Yeast).